The chain runs to 445 residues: Putative transcription factor bHLH056 (445 aa).

Disordered regions lie at residues 36 to 70 (NQTH…PPHL), 224 to 260 (QIQP…AEMH), and 365 to 445 (PFPN…QPTA). Residues 231–246 (SKLKAREETHGTEEAR) are compositionally biased toward basic and acidic residues. The bHLH domain maps to 255–304 (RTAEMHNLAERRRREKINEKMKTLQQLIPRCNKSTKVSTLDDAIEYVKSL). Over residues 418 to 433 (QGQTTSQLSSGQASSS) the composition is skewed to low complexity.

In terms of assembly, homodimer.

It localises to the nucleus. The protein is Putative transcription factor bHLH056 (BHLH56) of Arabidopsis thaliana (Mouse-ear cress).